Consider the following 443-residue polypeptide: Glutamate--tRNA ligase 1 (443 aa).

Residues 10–20 (PSPTGYIHVGN) carry the 'HIGH' region motif. The 'KMSKS' region motif lies at 241–245 (ALSKR). An ATP-binding site is contributed by Lys244.

It belongs to the class-I aminoacyl-tRNA synthetase family. Glutamate--tRNA ligase type 1 subfamily. As to quaternary structure, monomer.

Its subcellular location is the cytoplasm. The enzyme catalyses tRNA(Glu) + L-glutamate + ATP = L-glutamyl-tRNA(Glu) + AMP + diphosphate. Its function is as follows. Catalyzes the attachment of glutamate to tRNA(Glu) in a two-step reaction: glutamate is first activated by ATP to form Glu-AMP and then transferred to the acceptor end of tRNA(Glu). The polypeptide is Glutamate--tRNA ligase 1 (Ruegeria pomeroyi (strain ATCC 700808 / DSM 15171 / DSS-3) (Silicibacter pomeroyi)).